The primary structure comprises 72 residues: Hydrophobic protein OSR8 (72 aa).

2 helical membrane passes run Phe-9–Cys-29 and Leu-39–Leu-59.

The protein belongs to the UPF0057 (PMP3) family.

It localises to the membrane. The chain is Hydrophobic protein OSR8 (OSR8) from Oryza sativa subsp. japonica (Rice).